Here is a 75-residue protein sequence, read N- to C-terminus: Probable protein BRICK1-A (75 aa).

A coiled-coil region spans residues 41–72 (MSCRSRLATLNEKLTALERRIEYIEARVTKGE).

It belongs to the BRK1 family.

It localises to the cytoplasm. The protein localises to the cytoskeleton. Its function is as follows. Involved in regulation of actin and microtubule organization. Part of a WAVE complex that activates the Arp2/3 complex. The sequence is that of Probable protein BRICK1-A (brk1-a) from Xenopus laevis (African clawed frog).